We begin with the raw amino-acid sequence, 124 residues long: Aspartate 1-decarboxylase (124 aa).

S21 serves as the catalytic Schiff-base intermediate with substrate; via pyruvic acid. S21 bears the Pyruvic acid (Ser) mark. T53 is a binding site for substrate. Y54 acts as the Proton donor in catalysis. Residue 69 to 71 (GAA) coordinates substrate.

Belongs to the PanD family. Heterooctamer of four alpha and four beta subunits. Requires pyruvate as cofactor. Is synthesized initially as an inactive proenzyme, which is activated by self-cleavage at a specific serine bond to produce a beta-subunit with a hydroxyl group at its C-terminus and an alpha-subunit with a pyruvoyl group at its N-terminus.

The protein resides in the cytoplasm. The catalysed reaction is L-aspartate + H(+) = beta-alanine + CO2. It functions in the pathway cofactor biosynthesis; (R)-pantothenate biosynthesis; beta-alanine from L-aspartate: step 1/1. Catalyzes the pyruvoyl-dependent decarboxylation of aspartate to produce beta-alanine. The chain is Aspartate 1-decarboxylase from Dehalococcoides mccartyi (strain ATCC BAA-2266 / KCTC 15142 / 195) (Dehalococcoides ethenogenes (strain 195)).